The chain runs to 381 residues: Lipopolysaccharide 1,2-N-acetylglucosaminetransferase (381 aa).

The protein belongs to the glycosyltransferase group 1 family. Glycosyltransferase 4 subfamily.

Its subcellular location is the cell inner membrane. The enzyme catalyses UDP-N-acetyl-alpha-D-glucosamine + [lipopolysaccharide] = UDP + N-acetyl-alpha-D-glucosaminyl-[lipopolysaccharide].. It participates in bacterial outer membrane biogenesis; LPS core biosynthesis. Its function is as follows. Transferase involved in the biosynthesis of the core oligosaccharide region of lipopolysaccharide (LPS). Catalyzes the addition of the terminal N-acetyl-D-glucosamine (GlcNAc) group to the outer-core glucose II, the last step of the lipid A-core oligosaccharide biosynthesis. The polypeptide is Lipopolysaccharide 1,2-N-acetylglucosaminetransferase (Salmonella typhimurium (strain LT2 / SGSC1412 / ATCC 700720)).